The sequence spans 578 residues: Forkhead box protein P1 (578 aa).

The segment at 208-233 (GVCKWPGCETICEDFPSFLKHLNSEH) adopts a C2H2-type zinc-finger fold. Positions 250 to 271 (VQQLELQLSKDKERLQAMMSHL) are leucine-zipper. A ctbp1-binding region spans residues 284–288 (PLNLV). The span at 293–305 (LSKTASEASPQSL) shows a compositional bias: polar residues. The interval 293-325 (LSKTASEASPQSLPHTPTTPTAPLTPITQGPSV) is disordered. Over residues 306–320 (PHTPTTPTAPLTPIT) the composition is skewed to low complexity. The segment at residues 366 to 456 (RPPFTYASLI…PQKISGSPTL (91 aa)) is a DNA-binding region (fork-head). The disordered stretch occupies residues 511 to 578 (MEHTSSNGSD…EDDPVNDDME (68 aa)). The segment covering 515–527 (SSNGSDSSPGRSP) has biased composition (low complexity). Residues 568–578 (YEDDPVNDDME) show a composition bias toward acidic residues.

In terms of assembly, dimerization is required for DNA-binding. Isoform a, but not isoform b, interacts with ctbp1. In terms of tissue distribution, all isoforms show similar spatial expression. Localized to the animal hemisphere of early cleavage stage embryos. At tailbud stages, expressed in regions of the brain, eye and the splanchnic mesodermal layer of the lateral plate mesoderm surrounding the gut. At stage 35, expressed within the lens of the eye, in distinct regions of the head mesenchyme and in the area anterior to the gut. In the brain the anterior-most expression is restricted to the outer region of the mesencephalon. With ongoing development, additional expression is found in the curling gut.

The protein resides in the nucleus. In terms of biological role, transcriptional repressor. In Xenopus laevis (African clawed frog), this protein is Forkhead box protein P1.